We begin with the raw amino-acid sequence, 182 residues long: ATP-dependent protease subunit HslV (182 aa).

Residue threonine 2 is part of the active site. Na(+) contacts are provided by glycine 157, cysteine 160, and threonine 163.

It belongs to the peptidase T1B family. HslV subfamily. A double ring-shaped homohexamer of HslV is capped on each side by a ring-shaped HslU homohexamer. The assembly of the HslU/HslV complex is dependent on binding of ATP.

Its subcellular location is the cytoplasm. The catalysed reaction is ATP-dependent cleavage of peptide bonds with broad specificity.. Its activity is regulated as follows. Allosterically activated by HslU binding. In terms of biological role, protease subunit of a proteasome-like degradation complex believed to be a general protein degrading machinery. The sequence is that of ATP-dependent protease subunit HslV from Vibrio atlanticus (strain LGP32) (Vibrio splendidus (strain Mel32)).